We begin with the raw amino-acid sequence, 277 residues long: Carbonyl reductase [NADPH] 1 (277 aa).

NADP(+)-binding positions include 10 to 34 (VTGA…GDVL), 63 to 64 (DI), and Asn-90. Ser-30 carries the phosphoserine modification. Glutathione-binding positions include 95–97 (FKM) and Gln-106. Position 140 (Ser-140) interacts with substrate. Residue 193–194 (AY) participates in glutathione binding. The active-site Proton acceptor is the Tyr-194. Residues 194–198 (YGVTK) and 231–233 (VRT) contribute to the NADP(+) site.

This sequence belongs to the short-chain dehydrogenases/reductases (SDR) family. Monomer. Present in liver and kidney.

The protein localises to the cytoplasm. The catalysed reaction is a secondary alcohol + NADP(+) = a ketone + NADPH + H(+). It carries out the reaction prostaglandin F2alpha + NADP(+) = prostaglandin E2 + NADPH + H(+). It catalyses the reaction prostaglandin E1 + NADP(+) = 15-oxoprostaglandin E1 + NADPH + H(+). The enzyme catalyses menadione + NADPH + H(+) = menadiol + NADP(+). The catalysed reaction is prostaglandin D2 + NADP(+) = 15-oxoprostaglandin D2 + NADPH + H(+). It carries out the reaction prostaglandin E2 + NADP(+) = 15-oxoprostaglandin E2 + NADPH + H(+). It catalyses the reaction prostaglandin F2alpha + NADP(+) = 15-oxoprostaglandin F2alpha + NADPH + H(+). The enzyme catalyses daunorubicin + NADPH + H(+) = 13-dihydrodaunorubicin + NADP(+). The catalysed reaction is S-nitrosoglutathione + NADPH + H(+) = S-(hydroxysulfenamide)glutathione + NADP(+). It carries out the reaction a primary alcohol + NADP(+) = an aldehyde + NADPH + H(+). It catalyses the reaction cortisol + NADPH + H(+) = 20beta-dihydrocortisol + NADP(+). The enzyme catalyses corticosterone + NADPH + H(+) = 20beta-dihydrocorticosterone + NADP(+). Its function is as follows. NADPH-dependent reductase with broad substrate specificity. Catalyzes the reduction of a wide variety of carbonyl compounds including quinones, prostaglandins, menadione, plus various xenobiotics. Catalyzes the reduction of the antitumor anthracyclines doxorubicin and daunorubicin to the cardiotoxic compounds doxorubicinol and daunorubicinol. Can convert prostaglandin E to prostaglandin F2-alpha. Can bind glutathione, which explains its higher affinity for glutathione-conjugated substrates. Catalyzes the reduction of S-nitrosoglutathione. In addition, participates in the glucocorticoid metabolism by catalyzing the NADPH-dependent cortisol/corticosterone into 20beta-dihydrocortisol (20b-DHF) or 20beta-corticosterone (20b-DHB), which are weak agonists of NR3C1 and NR3C2 in adipose tissue. The chain is Carbonyl reductase [NADPH] 1 from Oryctolagus cuniculus (Rabbit).